The sequence spans 424 residues: Histidine--tRNA ligase (424 aa).

This sequence belongs to the class-II aminoacyl-tRNA synthetase family. As to quaternary structure, homodimer.

It is found in the cytoplasm. The catalysed reaction is tRNA(His) + L-histidine + ATP = L-histidyl-tRNA(His) + AMP + diphosphate + H(+). This chain is Histidine--tRNA ligase, found in Pediococcus pentosaceus (strain ATCC 25745 / CCUG 21536 / LMG 10740 / 183-1w).